The sequence spans 701 residues: 1,4-alpha-glucan branching enzyme GlgB (701 aa).

Asp-381 serves as the catalytic Nucleophile. The Proton donor role is filled by Glu-434.

It belongs to the glycosyl hydrolase 13 family. GlgB subfamily. As to quaternary structure, monomer.

The catalysed reaction is Transfers a segment of a (1-&gt;4)-alpha-D-glucan chain to a primary hydroxy group in a similar glucan chain.. The protein operates within glycan biosynthesis; glycogen biosynthesis. Its function is as follows. Catalyzes the formation of the alpha-1,6-glucosidic linkages in glycogen by scission of a 1,4-alpha-linked oligosaccharide from growing alpha-1,4-glucan chains and the subsequent attachment of the oligosaccharide to the alpha-1,6 position. This chain is 1,4-alpha-glucan branching enzyme GlgB, found in Jannaschia sp. (strain CCS1).